Reading from the N-terminus, the 766-residue chain is 1,4-alpha-glucan branching enzyme GlgB (766 aa).

Aspartate 431 (nucleophile) is an active-site residue. Glutamate 484 acts as the Proton donor in catalysis.

The protein belongs to the glycosyl hydrolase 13 family. GlgB subfamily. Monomer.

It catalyses the reaction Transfers a segment of a (1-&gt;4)-alpha-D-glucan chain to a primary hydroxy group in a similar glucan chain.. The protein operates within glycan biosynthesis; glycogen biosynthesis. In terms of biological role, catalyzes the formation of the alpha-1,6-glucosidic linkages in glycogen by scission of a 1,4-alpha-linked oligosaccharide from growing alpha-1,4-glucan chains and the subsequent attachment of the oligosaccharide to the alpha-1,6 position. This chain is 1,4-alpha-glucan branching enzyme GlgB, found in Thermosynechococcus vestitus (strain NIES-2133 / IAM M-273 / BP-1).